A 4471-amino-acid polypeptide reads, in one-letter code: Dynein axonemal heavy chain 10 (4471 aa).

The segment at 1 to 1793 is stem; it reads MVPEEVEVEI…NIRQCTGTFG (1793 aa). A disordered region spans residues 46–65; that stretch reads TESLGQPLNREDEEMDKEIS. 4 coiled-coil regions span residues 203 to 223, 602 to 622, 1071 to 1106, and 1217 to 1245; these read NVQK…GEIK, QEVK…EDRK, KLLN…EDLK, and VELL…KLFD. A glycan (N-linked (GlcNAc...) asparagine) is linked at N1074. Residues 1221–1254 form a TPR 1 repeat; that stretch reads GVYERELARHEKSRQELANAEKLFDLPITMYPEL. AAA regions lie at residues 1794-2015, 2075-2294, 2417-2665, and 2765-3014; these read YGYE…VLVM, DAVE…VIVE, IHAP…VFNG, and EYNE…LRRS. The short motif at 1832–1839 is the GPAGTGKT motif element; that stretch reads GPAGTGKT. An ATP-binding site is contributed by 1832–1839; that stretch reads GPAGTGKT. Positions 1882–1888 match the CFDEFNR motif motif; sequence CFDEFNR. ATP contacts are provided by residues 2113-2120 and 2455-2462; these read GPTRGGKS and GESGTSKT. TPR repeat units lie at residues 2736–2769 and 2771–2797; these read MALH…YNES and TKMN…MDRG. A coiled-coil region spans residues 2747-2770; that stretch reads EDIQDYEAAKALFQEILEEYNESN. 2803 to 2810 contacts ATP; that stretch reads GVGGSGKQ. The tract at residues 3029–3313 is stalk; the sequence is YSKLLDEKTQ…QKLQEEAEIM (285 aa). Coiled-coil stretches lie at residues 3045-3131, 3257-3327, and 3567-3638; these read KRLD…LAEV, KREK…ISGL, and ERRE…EKTA. The tract at residues 3399 to 3629 is AAA 5; that stretch reads LTDDVEISRW…TKSKATEVSE (231 aa). A TPR 4 repeat occupies 3802 to 3837; that stretch reads WQEWYDLDSLEQFPVPLGYDNNITPFQKLLILRCFR. The interval 3845–4062 is AAA 6; that stretch reads VTDYVTVTMG…FQVCMEILNT (218 aa). The stretch at 4074 to 4108 is one TPR 5 repeat; the sequence is RIPWGSLKYLIGEVMYGGRAIDSFDRRILTIYMDE. Positions 4235–4260 form a coiled coil; the sequence is LLQELERFNKLVVRMTKSLAELQRAL.

This sequence belongs to the dynein heavy chain family. As to quaternary structure, consists of at least two heavy chains and a number of intermediate and light chains. Expressed primarily in trachea and testis, 2 tissues containing axonemal structures. Also expressed in brain but not in adult heart.

Its subcellular location is the cytoplasm. It is found in the cytoskeleton. It localises to the cilium axoneme. Its function is as follows. Force generating protein of respiratory cilia. Produces force towards the minus ends of microtubules. Dynein has ATPase activity; the force-producing power stroke is thought to occur on release of ADP. Involved in sperm motility; implicated in sperm flagellar assembly. Probable inner arm dynein heavy chain. In Homo sapiens (Human), this protein is Dynein axonemal heavy chain 10 (DNAH10).